A 423-amino-acid polypeptide reads, in one-letter code: Imidazolonepropionase (423 aa).

2 residues coordinate Fe(3+): His78 and His80. Zn(2+) is bound by residues His78 and His80. Residues Arg87, Tyr150, and His183 each contribute to the 4-imidazolone-5-propanoate site. Tyr150 serves as a coordination point for N-formimidoyl-L-glutamate. A Fe(3+)-binding site is contributed by His247. His247 serves as a coordination point for Zn(2+). Glu250 contributes to the 4-imidazolone-5-propanoate binding site. Asp322 lines the Fe(3+) pocket. Position 322 (Asp322) interacts with Zn(2+). Positions 324 and 326 each coordinate N-formimidoyl-L-glutamate. Ser327 is a binding site for 4-imidazolone-5-propanoate.

Belongs to the metallo-dependent hydrolases superfamily. HutI family. Zn(2+) serves as cofactor. Fe(3+) is required as a cofactor.

The protein localises to the cytoplasm. It carries out the reaction 4-imidazolone-5-propanoate + H2O = N-formimidoyl-L-glutamate. It participates in amino-acid degradation; L-histidine degradation into L-glutamate; N-formimidoyl-L-glutamate from L-histidine: step 3/3. Its function is as follows. Catalyzes the hydrolytic cleavage of the carbon-nitrogen bond in imidazolone-5-propanoate to yield N-formimidoyl-L-glutamate. It is the third step in the universal histidine degradation pathway. This Bacillus thuringiensis (strain Al Hakam) protein is Imidazolonepropionase.